The primary structure comprises 100 residues: Integration host factor subunit alpha (100 aa).

A disordered region spans residues 50-70; sequence GNFQLRDKPQRPGRNPKTGEE.

Belongs to the bacterial histone-like protein family. Heterodimer of an alpha and a beta chain.

In terms of biological role, this protein is one of the two subunits of integration host factor, a specific DNA-binding protein that functions in genetic recombination as well as in transcriptional and translational control. The sequence is that of Integration host factor subunit alpha from Chromobacterium violaceum (strain ATCC 12472 / DSM 30191 / JCM 1249 / CCUG 213 / NBRC 12614 / NCIMB 9131 / NCTC 9757 / MK).